A 391-amino-acid polypeptide reads, in one-letter code: Lipid-A-disaccharide synthase (391 aa).

It belongs to the LpxB family.

It catalyses the reaction a lipid X + a UDP-2-N,3-O-bis[(3R)-3-hydroxyacyl]-alpha-D-glucosamine = a lipid A disaccharide + UDP + H(+). It functions in the pathway bacterial outer membrane biogenesis; LPS lipid A biosynthesis. Functionally, condensation of UDP-2,3-diacylglucosamine and 2,3-diacylglucosamine-1-phosphate to form lipid A disaccharide, a precursor of lipid A, a phosphorylated glycolipid that anchors the lipopolysaccharide to the outer membrane of the cell. This is Lipid-A-disaccharide synthase from Aromatoleum aromaticum (strain DSM 19018 / LMG 30748 / EbN1) (Azoarcus sp. (strain EbN1)).